Here is a 274-residue protein sequence, read N- to C-terminus: Bis(5'-nucleosyl)-tetraphosphatase, symmetrical (274 aa).

The protein belongs to the Ap4A hydrolase family.

It catalyses the reaction P(1),P(4)-bis(5'-adenosyl) tetraphosphate + H2O = 2 ADP + 2 H(+). Hydrolyzes diadenosine 5',5'''-P1,P4-tetraphosphate to yield ADP. The sequence is that of Bis(5'-nucleosyl)-tetraphosphatase, symmetrical from Buchnera aphidicola subsp. Acyrthosiphon pisum (strain Tuc7).